Here is a 437-residue protein sequence, read N- to C-terminus: Leucine-rich repeat flightless-interacting protein 2 (437 aa).

Position 18 is a phosphoserine (Ser-18). Residues 22–49 (EALSNIAREAEARLAAKRAARAEARDIR) adopt a coiled-coil conformation. Positions 33-62 (ARLAAKRAARAEARDIRMRELERQQRESSS) are enriched in basic and acidic residues. The segment at 33-152 (ARLAAKRAAR…DTSLSELRES (120 aa)) is disordered. Positions 63–74 (KDITGTHWSRAS) are enriched in polar residues. The span at 77 to 105 (KRRDMMYDSIKDRSSRVSSLLDEKSDKQY) shows a compositional bias: basic and acidic residues. Positions 110–139 (TRPSSRNSASATTPLSGNSSRRGSGDTSSL) are enriched in polar residues. Phosphoserine occurs at positions 114, 117, 125, 129, and 133. Position 136 is a phosphothreonine (Thr-136). Phosphoserine occurs at positions 137 and 138. 2 coiled-coil regions span residues 143–239 (DTSL…LIEK) and 282–430 (LDVR…KANR).

Belongs to the LRRFIP family. As to quaternary structure, interacts with DVL3 and FLII. Weakly interacts with MYD88 in resting cells. Following LPS-stimulation, the interaction with MYD88 is rapidly enhanced; the complex gradually dissociates to basal levels after 6 hours of stimulation. Interaction with MYD88 is regulated by LPS-induced phosphorylation. In the presence of LPS, competes with FLII for MYD88-binding.

In terms of biological role, may function as activator of the canonical Wnt signaling pathway, in association with DVL3, upstream of CTNNB1/beta-catenin. Positively regulates Toll-like receptor (TLR) signaling in response to agonist probably by competing with the negative FLII regulator for MYD88-binding. The sequence is that of Leucine-rich repeat flightless-interacting protein 2 (Lrrfip2) from Rattus norvegicus (Rat).